Consider the following 234-residue polypeptide: 1-(5-phosphoribosyl)-5-[(5-phosphoribosylamino)methylideneamino] imidazole-4-carboxamide isomerase (234 aa).

D9 (proton acceptor) is an active-site residue. The active-site Proton donor is D131.

This sequence belongs to the HisA/HisF family.

It is found in the cytoplasm. The enzyme catalyses 1-(5-phospho-beta-D-ribosyl)-5-[(5-phospho-beta-D-ribosylamino)methylideneamino]imidazole-4-carboxamide = 5-[(5-phospho-1-deoxy-D-ribulos-1-ylimino)methylamino]-1-(5-phospho-beta-D-ribosyl)imidazole-4-carboxamide. The protein operates within amino-acid biosynthesis; L-histidine biosynthesis; L-histidine from 5-phospho-alpha-D-ribose 1-diphosphate: step 4/9. In Staphylococcus epidermidis (strain ATCC 35984 / DSM 28319 / BCRC 17069 / CCUG 31568 / BM 3577 / RP62A), this protein is 1-(5-phosphoribosyl)-5-[(5-phosphoribosylamino)methylideneamino] imidazole-4-carboxamide isomerase.